The chain runs to 448 residues: T-box transcription factor TBX19 (448 aa).

Residues 45–218 constitute a DNA-binding region (T-box); it reads LEDAPLWQRF…YNPFAKAFLD (174 aa).

The protein resides in the nucleus. Transcriptional regulator involved in developmental processes. Can activate POMC gene expression and repress the alpha glycoprotein subunit and thyroid-stimulating hormone beta promoters. This is T-box transcription factor TBX19 from Homo sapiens (Human).